The sequence spans 274 residues: 4-diphosphocytidyl-2-C-methyl-D-erythritol kinase (274 aa).

Lys10 is a catalytic residue. 101–111 lines the ATP pocket; the sequence is PTQAGLGGGSA. The active site involves Asp143.

It belongs to the GHMP kinase family. IspE subfamily.

It catalyses the reaction 4-CDP-2-C-methyl-D-erythritol + ATP = 4-CDP-2-C-methyl-D-erythritol 2-phosphate + ADP + H(+). It functions in the pathway isoprenoid biosynthesis; isopentenyl diphosphate biosynthesis via DXP pathway; isopentenyl diphosphate from 1-deoxy-D-xylulose 5-phosphate: step 3/6. Functionally, catalyzes the phosphorylation of the position 2 hydroxy group of 4-diphosphocytidyl-2C-methyl-D-erythritol. The sequence is that of 4-diphosphocytidyl-2-C-methyl-D-erythritol kinase from Helicobacter pylori (strain J99 / ATCC 700824) (Campylobacter pylori J99).